Here is a 217-residue protein sequence, read N- to C-terminus: Large ribosomal subunit protein uL1 (217 aa).

This sequence belongs to the universal ribosomal protein uL1 family. In terms of assembly, component of the large ribosomal subunit (LSU). Mature N.crassa ribosomes consist of a small (40S) and a large (60S) subunit. The 40S small subunit contains 1 molecule of ribosomal RNA (18S rRNA) and at least 32 different proteins. The large 60S subunit contains 3 rRNA molecules (26S, 5.8S and 5S rRNA) and at least 42 different proteins. uL1 forms part of the L1 stalk.

It localises to the cytoplasm. Functionally, component of the ribosome, a large ribonucleoprotein complex responsible for the synthesis of proteins in the cell. The small ribosomal subunit (SSU) binds messenger RNAs (mRNAs) and translates the encoded message by selecting cognate aminoacyl-transfer RNA (tRNA) molecules. The large subunit (LSU) contains the ribosomal catalytic site termed the peptidyl transferase center (PTC), which catalyzes the formation of peptide bonds, thereby polymerizing the amino acids delivered by tRNAs into a polypeptide chain. The nascent polypeptides leave the ribosome through a tunnel in the LSU and interact with protein factors that function in enzymatic processing, targeting, and the membrane insertion of nascent chains at the exit of the ribosomal tunnel. uL1 forms part of the L1 stalk, a mobile element that plays a role in evacuating the exit-site tRNA. This chain is Large ribosomal subunit protein uL1 (crp-74), found in Neurospora crassa (strain ATCC 24698 / 74-OR23-1A / CBS 708.71 / DSM 1257 / FGSC 987).